We begin with the raw amino-acid sequence, 649 residues long: Golgin subfamily A member 6-like protein 26 (649 aa).

Disordered stretches follow at residues 1 to 94, 300 to 330, 358 to 440, 455 to 572, and 584 to 620; these read MWPQ…HQEA, QEEKIREQEEKMRRQEEMMWEKEEKMRRQEE, EKMH…EMWR, KEKM…REQE, and EQEEMMQEQEEKMWEQEEKMCEQEEKMQEQEEKMRRQ. Residues 10-23 show a composition bias toward low complexity; that stretch reads HPHLPTHPHLPTHP. Positions 25-46 are enriched in basic and acidic residues; the sequence is MSKETRQSKLAEAKEQLTDHHP. Composition is skewed to polar residues over residues 47-57 and 65-77; these read QTNPSVGTAAS and NNGTNPETTTSGG. A compositionally biased stretch (basic and acidic residues) spans 80-94; the sequence is SPEDEQKASHQHQEA. The stretch at 151–644 forms a coiled coil; it reads LEQALSAVAT…EEKMQEHQEH (494 aa).

The protein belongs to the GOLGA6 family.

In Homo sapiens (Human), this protein is Golgin subfamily A member 6-like protein 26 (GOLGA6L26).